We begin with the raw amino-acid sequence, 26 residues long: Orexigenic neuropeptide 26RFa (26 aa).

Residue phenylalanine 26 is modified to Phenylalanine amide.

As to expression, brain.

It is found in the secreted. May have orexigenic activity. May promote aldosterone secretion by the adrenal gland. This chain is Orexigenic neuropeptide 26RFa, found in Pelophylax lessonae (Pool frog).